A 358-amino-acid chain; its full sequence is MPKVSSDTLWDIAAAEVRSRESRTDEEEAEEEDAHFPSQRTVFFMGSKAGGKTTILLRFLERDETAKPTLALEYTFGRRARGHNTPKDIAHLWELGGGISLSDLVQIPITADNVSFLSVVLVLDLSKPNALWETMESLLGSARNQVEKVCAALQKTGESRSGKQRVPRVLHKDYPDRELISPFPVPLLIVGSKFDIFQDFDSEKRKVICKTLRFLAHFYGASLIFTSSKSETTMSKSRSFINQLAFGTERPKSISTDPSKPLAIPAGSDSLSQIGPPVATEVDIGTLHAKNPFDLWKKVFEKVFPHESTRERKELKDPVKDPQFSEPLIDSIRAQKDQELDQYKREQAKSWKSLALDP.

2 disordered regions span residues 1 to 35 and 307 to 358; these read MPKV…EDAH and ESTR…ALDP. The span at 24–33 shows a compositional bias: acidic residues; it reads TDEEEAEEED. Basic and acidic residues-rich tracts occupy residues 307–320 and 333–349; these read ESTR…DPVK and RAQK…EQAK.

This sequence belongs to the dynein light intermediate chain family. In terms of assembly, light intermediate chain of the cytoplasmic dynein complex 2, a multisubunit complex composed at least of eleven different proteins. The cytoplasmic dynein 2 complex consists of two catalytic heavy chains (HCs) and a number of non-catalytic subunits presented by intermediate chains (ICs), light intermediate chains (LICs) and light chains (LCs). Among them, a heavy chain (DYNC2H1), two intermediate chains (DYNC2I2 and DYNC2I1), a light intermediate chain (DYNC2LI1), and a light chain (DYNLT2B) are unique to the dynein-2 complex, but a subset of light chains are also shared by dynein-1 and dynein-2 complexes. Dynein-2 complex is built around two copies of cytoplasmic dynein 2 heavy chain 1 (DYNC2H1). The C-terminal region forms the motor domain, which converts the energy from ATP hydrolysis into movement. Its N-terminal region forms the tail, an extended structure that binds the other subunits and holds the two heavy chains in a homodimer.

It is found in the cytoplasm. The protein resides in the cell projection. It localises to the cilium. The protein localises to the cytoskeleton. Its subcellular location is the cilium basal body. It is found in the cilium axoneme. The protein resides in the microtubule organizing center. It localises to the centrosome. Functionally, acts as one of several non-catalytic accessory components of the cytoplasmic dynein 2 complex (dynein-2 complex), a motor protein complex that drives the movement of cargos along microtubules within cilia and flagella in concert with the intraflagellar transport (IFT) system, facilitating the assembly of these organelles. The protein is Cytoplasmic dynein 2 light intermediate chain 1 (dync2li1) of Danio rerio (Zebrafish).